Consider the following 215-residue polypeptide: Autophagy-related protein 101 (215 aa).

Residues 124-147 form a disordered region; sequence PVGKSHHSKLVMDPGEASEERSSR.

It belongs to the ATG101 family. Interacts with ATG11 and ATG13A.

It is found in the cytoplasmic vesicle. The protein resides in the autophagosome. Accessory protein involved in autophagy. Acts as a scaffold protein of the ATG1-ATG13 complex for faithful delivery of autophagic vesicles to the vacuole. Required for selective mitophagy. This Arabidopsis thaliana (Mouse-ear cress) protein is Autophagy-related protein 101.